A 339-amino-acid polypeptide reads, in one-letter code: Uroporphyrinogen decarboxylase (339 aa).

Residues 23-27, D72, Y147, S202, and H315 each bind substrate; that span reads RQAGR.

It belongs to the uroporphyrinogen decarboxylase family. In terms of assembly, homodimer.

It localises to the cytoplasm. It catalyses the reaction uroporphyrinogen III + 4 H(+) = coproporphyrinogen III + 4 CO2. It participates in porphyrin-containing compound metabolism; protoporphyrin-IX biosynthesis; coproporphyrinogen-III from 5-aminolevulinate: step 4/4. Its function is as follows. Catalyzes the decarboxylation of four acetate groups of uroporphyrinogen-III to yield coproporphyrinogen-III. This chain is Uroporphyrinogen decarboxylase, found in Desulfotalea psychrophila (strain LSv54 / DSM 12343).